The primary structure comprises 902 residues: MGAASCEDEELEFKLVFGEEKEAPPLGAGGLGEELDSEDAPPCCRLALGEPPPYGAAPIGIPRPPPPRPGMHSPPPRPAPSPGTWESQPARSVRLGGPGGGAGGAGGGRVLECPSIRITSISPTPEPPAALEDNPDAWGDGSPRDYPPPEGFGGYREAGGQGGGAFFSPSPGSSSLSSWSFFSDASDEAALYAACDEVESELNEAASRFGLGSPLPSPRASPRPWTPEDPWSLYGPSPGGRGPEDSWLLLSAPGPTPASPRPASPCGKRRYSSSGTPSSASPALSRRGSLGEEGSEPPPPPPLPLARDPGSPGPFDYVGAPPAESIPQKTRRTSSEQAVALPRSEEPASCNGKLPLGAEESVAPPGGSRKEVAGMDYLAVPSPLAWSKARIGGHSPIFRTSALPPLDWPLPSQYEQLELRIEVQPRAHHRAHYETEGSRGAVKAAPGGHPVVKLLGYSEKPLTLQMFIGTADERNLRPHAFYQVHRITGKMVATASYEAVVSGTKVLEMTLLPENNMAANIDCAGILKLRNSDIELRKGETDIGRKNTRVRLVFRVHVPQGGGKVVSVQAASVPIECSQRSAQELPQVEAYSPSACSVRGGEELVLTGSNFLPDSKVVFIERGPDGKLQWEEEATVNRLQSNEVTLTLTVPEYSNKRVSRPVQVYFYVSNGRRKRSPTQSFRFLPVICKEEPLPDSSLRGFPSASATPFGTDMDFSPPRPPYPSYPHEDPACETPYLSEGFGYGMPPLYPQTGPPPSYRPGLRMFPETRGTTGCAQPPAVSFLPRPFPSDPYGGRGSSFSLGLPFSPPAPFRPPPLPASPPLEGPFPSQSDVHPLPAEGYNKVGPGYGPGEGAPEQEKSRGGYSSGFRDSVPIQGITLEEVSEIIGRDLSGFPAPPGEEPPA.

Disordered regions lie at residues 16–180 and 208–369; these read VFGE…SSWS and RFGL…GGSR. The segment covering 50–81 has biased composition (pro residues); the sequence is EPPPYGAAPIGIPRPPPPRPGMHSPPPRPAPS. Residues 96–109 are compositionally biased toward gly residues; the sequence is GGPGGGAGGAGGGR. A calcineurin-binding region spans residues 114 to 119; that stretch reads PSIRIT. Gly residues predominate over residues 151–165; the sequence is GFGGYREAGGQGGGA. Over residues 166–180 the composition is skewed to low complexity; sequence FFSPSPGSSSLSSWS. Serine 168 and serine 170 each carry phosphoserine; by MAPK7 and MAPK14. Phosphoserine; by MAPK8 and MAPK9 occurs at positions 213 and 217. The SP 1 repeat unit spans residues 213 to 229; sequence SPLPSPRASPRPWTPED. The tract at residues 213-293 is 2 approximate SP repeats; that stretch reads SPLPSPRASP…LSRRGSLGEE (81 aa). Composition is skewed to pro residues over residues 215 to 227 and 254 to 263; these read LPSPRASPRPWTP and GPTPASPRPA. A Nuclear localization signal motif is present at residues 268-270; that stretch reads KRR. Low complexity predominate over residues 272–288; it reads SSSGTPSSASPALSRRG. The SP 2; approximate repeat unit spans residues 277–293; sequence PSSASPALSRRGSLGEE. 2 positions are modified to phosphoserine; by RPS6KA3: serine 289 and serine 344. One can recognise an RHD domain in the interval 401 to 582; sequence SALPPLDWPL…VPIECSQRSA (182 aa). A DNA-binding region spans residues 430–437; sequence RAHYETEG. The IPT/TIG domain occupies 586 to 683; that stretch reads PQVEAYSPSA…KRSPTQSFRF (98 aa). A Nuclear localization signal motif is present at residues 672 to 674; that stretch reads RRK. Residue lysine 689 forms a Glycyl lysine isopeptide (Lys-Gly) (interchain with G-Cter in SUMO2) linkage. A disordered region spans residues 791 to 870; the sequence is PYGGRGSSFS…GGYSSGFRDS (80 aa). A compositionally biased stretch (pro residues) spans 805-824; the sequence is FSPPAPFRPPPLPASPPLEG.

Member of the multicomponent NFATC transcription complex that consists of at least two components, a pre-existing cytoplasmic component NFATC2 and an inducible nuclear component NFATC1. Other NFAT proteins, such as NFATC3, or members of the activating protein-1 (AP-1) family and MAF can also bind the complex. NFAT proteins can bind DNA as monomers or dimers. Component of a promoter-binding complex composed of STAT3, NFATC3 and NFATC4; complex formation is enhanced by calcineurin. Interacts with CREBBP; this interaction potentiates transcription activation. Interacts with MAPK8/JNK1 and MAPK9/JNK2. Interacts with GATA4 (via the second Zn finger). Interacts (via N-terminus) with IRAK1 (via C-terminus). Interacts with RPS6KA3. Interacts with HOMER1, HOMER2 and HOMER3; this interaction competes with calcineurin/PPP3CA-binding and hence prevents NFATC4 dephosphorylation and activation. Interacts with ESR1 and ESR2; this interaction decreases NFATC4 transcriptional activity. Interacts with MTOR and MAPK7/ERK5. Interacts with TRIM17; this interaction prevents NFATC3 nuclear localization. Interacts with TCF25 (via C-terminus); the interaction leads to suppression of NFATC4 transcription factor activity and is reduced following stimulation with angiotensin-2. Phosphorylated by NFATC-kinases; dephosphorylated by calcineurin/PPP3CA. Phosphorylated on Ser-168 and Ser-170 by MTOR, IRAK1, MAPK7/ERK5 and MAPK14/p38, on Ser-213 and Ser-217 by MAPK8/JNK1 and MAPK9/JNK2, and on Ser-289 and Ser-344 by RPS6KA3. Phosphorylated by GSK3B. Phosphorylation by GSK3B markedly increases NFATC4 ubiquitination. Phosphorylation at Ser-168 and Ser-170 is stimulated by UV irradiation. Phosphorylation determines subcellular location: the hyperphosphorylated protein is cytosolic, while the dephosphorylated form is targeted to the nucleus. In terms of processing, ubiquitinated, leading to degradation by the proteasome. Ubiquitination may be stimulated by GSK3B-dependent phosphorylation. Polyubiquitin linkage mainly occurs through 'Lys-48'. As to expression, widely expressed, with high levels in placenta, lung, kidney, testis and ovary. Weakly expressed in spleen and thymus. In the hippocampus, expressed in the granular layer of the dentate gyrus, in the pyramidal neurons of CA3 region, and in the hippocampal fissure. Expressed in the heart (at protein level).

It localises to the cytoplasm. It is found in the nucleus. With respect to regulation, transcriptional activity may be repressed by ESR1 and ESR2. Its function is as follows. Ca(2+)-regulated transcription factor that is involved in several processes, including the development and function of the immune, cardiovascular, musculoskeletal, and nervous systems. Involved in T-cell activation, stimulating the transcription of cytokine genes, including that of IL2 and IL4. Along with NFATC3, involved in embryonic heart development. Following JAK/STAT signaling activation and as part of a complex with NFATC3 and STAT3, binds to the alpha-beta E4 promoter region of CRYAB and activates transcription in cardiomyocytes. Involved in mitochondrial energy metabolism required for cardiac morphogenesis and function. Transactivates many genes involved in the cardiovascular system, including AGTR2, NPPB/BNP (in synergy with GATA4), NPPA/ANP/ANF and MYH7/beta-MHC. Involved in the regulation of adult hippocampal neurogenesis. Involved in BDNF-driven pro-survival signaling in hippocampal adult-born neurons. Involved in the formation of long-term spatial memory and long-term potentiation. In cochlear nucleus neurons, may play a role in deafferentation-induced apoptosis during the developmental critical period, when auditory neurons depend on afferent input for survival. Binds to and activates the BACE1/Beta-secretase 1 promoter, hence may regulate the proteolytic processing of the amyloid precursor protein (APP). Plays a role in adipocyte differentiation. May be involved in myoblast differentiation into myotubes. Binds the consensus DNA sequence 5'-GGAAAAT-3'. In the presence of CREBBP, activates TNF transcription. Binds to PPARG gene promoter and regulates its activity. Binds to PPARG and REG3G gene promoters. The chain is Nuclear factor of activated T-cells, cytoplasmic 4 (NFATC4) from Homo sapiens (Human).